Reading from the N-terminus, the 105-residue chain is Ig lambda chain C region (105 aa).

The 99-residue stretch at 2 to 100 (PKAAPTVNLF…EGTIVEKTVT (99 aa)) folds into the Ig-like domain. Cys-27 and Cys-86 are joined by a disulfide.

The protein is Ig lambda chain C region of Sus scrofa (Pig).